Reading from the N-terminus, the 148-residue chain is 3-dehydroquinate dehydratase (148 aa).

Catalysis depends on Y23, which acts as the Proton acceptor. Substrate is bound by residues N75, H81, and D88. The active-site Proton donor is H101. Substrate-binding positions include 102 to 103 (LS) and R112.

This sequence belongs to the type-II 3-dehydroquinase family. As to quaternary structure, homododecamer.

The enzyme catalyses 3-dehydroquinate = 3-dehydroshikimate + H2O. Its pathway is metabolic intermediate biosynthesis; chorismate biosynthesis; chorismate from D-erythrose 4-phosphate and phosphoenolpyruvate: step 3/7. Functionally, catalyzes a trans-dehydration via an enolate intermediate. In Ectopseudomonas mendocina (strain ymp) (Pseudomonas mendocina), this protein is 3-dehydroquinate dehydratase.